The primary structure comprises 410 residues: Adenosylhomocysteinase (410 aa).

Substrate-binding residues include Asp117 and Glu142. 143–145 is an NAD(+) binding site; sequence TTT. Lys172 and Asp176 together coordinate substrate. NAD(+) contacts are provided by residues Asn177, 206–211, Glu229, 285–287, and Asn332; these read GYGYCG and AGH.

The protein belongs to the adenosylhomocysteinase family. The cofactor is NAD(+).

The protein localises to the cytoplasm. The enzyme catalyses S-adenosyl-L-homocysteine + H2O = L-homocysteine + adenosine. It participates in amino-acid biosynthesis; L-homocysteine biosynthesis; L-homocysteine from S-adenosyl-L-homocysteine: step 1/1. Functionally, may play a key role in the regulation of the intracellular concentration of adenosylhomocysteine. This is Adenosylhomocysteinase from Thermoplasma acidophilum (strain ATCC 25905 / DSM 1728 / JCM 9062 / NBRC 15155 / AMRC-C165).